The primary structure comprises 264 residues: Acyl-[acyl-carrier-protein]--UDP-N-acetylglucosamine O-acyltransferase (264 aa).

The protein belongs to the transferase hexapeptide repeat family. LpxA subfamily. In terms of assembly, homotrimer.

It localises to the cytoplasm. It catalyses the reaction a (3R)-hydroxyacyl-[ACP] + UDP-N-acetyl-alpha-D-glucosamine = a UDP-3-O-[(3R)-3-hydroxyacyl]-N-acetyl-alpha-D-glucosamine + holo-[ACP]. It functions in the pathway glycolipid biosynthesis; lipid IV(A) biosynthesis; lipid IV(A) from (3R)-3-hydroxytetradecanoyl-[acyl-carrier-protein] and UDP-N-acetyl-alpha-D-glucosamine: step 1/6. In terms of biological role, involved in the biosynthesis of lipid A, a phosphorylated glycolipid that anchors the lipopolysaccharide to the outer membrane of the cell. In Rickettsia typhi (strain ATCC VR-144 / Wilmington), this protein is Acyl-[acyl-carrier-protein]--UDP-N-acetylglucosamine O-acyltransferase.